Here is a 661-residue protein sequence, read N- to C-terminus: Heme transporter BhuA (661 aa).

Positions 1–23 (MKFTRTLVLVSTSLLATVATSQA) are cleaved as a signal peptide. Residues 48-159 (KDNIEATGGT…AAGAIRYETV (112 aa)) enclose the TBDR plug domain. Positions 170-661 (TFGARIIGSY…TFTFQTAFKF (492 aa)) constitute a TBDR beta-barrel domain.

This sequence belongs to the TonB-dependent receptor family.

The protein resides in the cell outer membrane. Heme transporter playing an important role in stationary-phase iron acquisition and required for maintenance of chronic infection in mice. In Brucella abortus (strain 2308), this protein is Heme transporter BhuA (bhuA).